The primary structure comprises 334 residues: Glycerol-3-phosphate dehydrogenase [NAD(P)+] (334 aa).

NADPH is bound by residues serine 11, tryptophan 12, arginine 32, and lysine 106. Positions 106 and 136 each coordinate sn-glycerol 3-phosphate. NADPH is bound at residue alanine 140. 5 residues coordinate sn-glycerol 3-phosphate: lysine 191, aspartate 244, serine 254, arginine 255, and asparagine 256. Lysine 191 serves as the catalytic Proton acceptor. Arginine 255 serves as a coordination point for NADPH. Residues valine 279 and glutamate 281 each contribute to the NADPH site.

The protein belongs to the NAD-dependent glycerol-3-phosphate dehydrogenase family.

It localises to the cytoplasm. It carries out the reaction sn-glycerol 3-phosphate + NAD(+) = dihydroxyacetone phosphate + NADH + H(+). The enzyme catalyses sn-glycerol 3-phosphate + NADP(+) = dihydroxyacetone phosphate + NADPH + H(+). It participates in membrane lipid metabolism; glycerophospholipid metabolism. Catalyzes the reduction of the glycolytic intermediate dihydroxyacetone phosphate (DHAP) to sn-glycerol 3-phosphate (G3P), the key precursor for phospholipid synthesis. This chain is Glycerol-3-phosphate dehydrogenase [NAD(P)+], found in Parafrankia sp. (strain EAN1pec).